The following is a 214-amino-acid chain: DNA-directed RNA polymerase subunit alpha (214 aa).

The protein belongs to the RNA polymerase alpha chain family. As to quaternary structure, in plastids the minimal PEP RNA polymerase catalytic core is composed of four subunits: alpha, beta, beta', and beta''. When a (nuclear-encoded) sigma factor is associated with the core the holoenzyme is formed, which can initiate transcription.

Its subcellular location is the plastid. It is found in the chloroplast. It catalyses the reaction RNA(n) + a ribonucleoside 5'-triphosphate = RNA(n+1) + diphosphate. Functionally, DNA-dependent RNA polymerase catalyzes the transcription of DNA into RNA using the four ribonucleoside triphosphates as substrates. In Euglena viridis (Cercaria viridis), this protein is DNA-directed RNA polymerase subunit alpha (rpoA).